Consider the following 315-residue polypeptide: Putative peptide transport system permease protein BMEII0209 (315 aa).

6 consecutive transmembrane segments (helical) span residues 13 to 33, 102 to 122, 136 to 156, 178 to 198, 238 to 258, and 287 to 307; these read AIPV…LLPG, LALL…VVAA, LALL…VILF, WLRS…GYLA, VSVL…SVVI, and MLFL…LYTI. The region spanning 96–305 is the ABC transmembrane type-1 domain; the sequence is LPVTISLALL…AINVLVDILY (210 aa).

Belongs to the binding-protein-dependent transport system permease family. In terms of assembly, the complex is composed of two ATP-binding proteins (BMEII0205 and BMEII0206), two transmembrane proteins (BMEII0207/BMEII0208 and BMEII0209) and a solute-binding protein (BMEII0210).

Its subcellular location is the cell inner membrane. Functionally, probably part of an ABC transporter complex that could be involved in peptide import. Probably responsible for the translocation of the substrate across the membrane. This chain is Putative peptide transport system permease protein BMEII0209, found in Brucella melitensis biotype 1 (strain ATCC 23456 / CCUG 17765 / NCTC 10094 / 16M).